An 807-amino-acid chain; its full sequence is MEDLKTVEASDNVVSDNVEKVNPELIDSTIRESNIQSATKVDNIPQSQTDTEETQQSQTDTEETQQSQTDDTTGNAKIYVDDTFSPSDAATAAVLTGKDSTSTTIVEEVMEPDEIGLPSVKITEAATGTARNGGGSPRTVSSPRFSGSPVSTGTPKNVDSHRGLIDTAAPFESVKEAVSKFGGITDWKSHRMQAVERRKLIEEELKKIHEEIPEYKTHSETAEAAKLQVLKELESTKRLIEQLKLNLDKAQTEEQQAKQDSELAKLRVEEMEQGIAEDVSVAAKAQLEVAKARHTTAITELSSVKEELETLHKEYDALVQDKDVAVKKVEEAMLASKEVEKTVEELTIELIATKESLESAHASHLEAEEQRIGAAMARDQDTHRWEKELKQAEEELQRLNQQIHSSKDLKSKLDTASALLLDLKAELVAYMESKLKQEACDSTTNTDPSTENMSHPDLHAAVASAKKELEEVNVNIEKAAAEVSCLKLASSSLQLELEKEKSTLASIKQREGMASIAVASIEAEIDRTRSEIASVQSKEKDAREKMVELPKQLQQAAEEADEAKSLAEVAREELRKAKEEAEQAKAGASTMESRLFAAQKEIEAAKASERLALAAIKALEESESTLKANDTDSPRSVTLSLEEYYELSKRAHEAEELANARVAAAVSRIEEAKETEMRSLEKLEEVNRDMDARKKALKEATEKAEKAKEGKLGVEQELRKWRAEHEQKRKAGDGVNTEKNLKESFEGGKMEQSPEAVVYASSPSESYGTEENSETNLSPQTKSRKKKKKLSFPRFFMFLSKKKSHNN.

Residues 1 to 162 are disordered; that stretch reads MEDLKTVEAS…GTPKNVDSHR (162 aa). The span at 31 to 40 shows a compositional bias: polar residues; it reads RESNIQSATK. Residues 46 to 73 show a composition bias toward low complexity; sequence QSQTDTEETQQSQTDTEETQQSQTDDTT. The span at 138 to 157 shows a compositional bias: polar residues; the sequence is RTVSSPRFSGSPVSTGTPKN. The residue at position 148 (Ser-148) is a Phosphoserine. Coiled coils occupy residues 191-429, 457-489, 516-621, and 664-724; these read RMQA…ELVA, DLHA…LKLA, IAVA…ALEE, and AAVS…WRAE. Disordered stretches follow at residues 532-565 and 722-789; these read IASV…EAKS and RAEH…KKKK. Composition is skewed to basic and acidic residues over residues 537-548, 722-732, and 739-749; these read SKEKDAREKMVE, RAEHEQKRKAG, and KNLKESFEGGK. The segment covering 761–781 has biased composition (polar residues); it reads SSPSESYGTEENSETNLSPQT.

Belongs to the WEB family. As to quaternary structure, interacts with PMI2. As to expression, ubiquitous but preferentially in chloroplast-containing tissues.

Its subcellular location is the cytoplasm. Functionally, required for the chloroplast avoidance response under high intensity blue light. This avoidance response consists in the relocation of chloroplasts on the anticlinal side of exposed cells. Acts in association with PMI2 to maintain the velocity of chloroplast photorelocation movement via cp-actin filaments regulation. This is Protein WEAK CHLOROPLAST MOVEMENT UNDER BLUE LIGHT 1 (WEB1) from Arabidopsis thaliana (Mouse-ear cress).